A 394-amino-acid polypeptide reads, in one-letter code: Elongation factor Tu (394 aa).

Positions 10 to 204 constitute a tr-type G domain; that stretch reads KPHINVGTIG…SLDKYIPIPV (195 aa). The G1 stretch occupies residues 19–26; it reads GHVDHGKT. 19–26 provides a ligand contact to GTP; the sequence is GHVDHGKT. Thr26 is a Mg(2+) binding site. Positions 60–64 are G2; that stretch reads GITIN. Residues 81–84 are G3; the sequence is DCPG. GTP contacts are provided by residues 81 to 85 and 136 to 139; these read DCPGH and NKCD. Residues 136-139 are G4; it reads NKCD. Positions 174 to 176 are G5; the sequence is SAL.

This sequence belongs to the TRAFAC class translation factor GTPase superfamily. Classic translation factor GTPase family. EF-Tu/EF-1A subfamily. As to quaternary structure, monomer.

It localises to the cytoplasm. It carries out the reaction GTP + H2O = GDP + phosphate + H(+). GTP hydrolase that promotes the GTP-dependent binding of aminoacyl-tRNA to the A-site of ribosomes during protein biosynthesis. This Buchnera aphidicola subsp. Cinara cedri (strain Cc) protein is Elongation factor Tu.